Here is a 265-residue protein sequence, read N- to C-terminus: Glutamate racemase (265 aa).

Substrate-binding positions include 12–13 (DS) and 44–45 (YG). The active-site Proton donor/acceptor is cysteine 75. 76–77 (NT) provides a ligand contact to substrate. Cysteine 186 (proton donor/acceptor) is an active-site residue. 187–188 (TH) serves as a coordination point for substrate.

Belongs to the aspartate/glutamate racemases family.

It catalyses the reaction L-glutamate = D-glutamate. The protein operates within cell wall biogenesis; peptidoglycan biosynthesis. Its function is as follows. Provides the (R)-glutamate required for cell wall biosynthesis. The polypeptide is Glutamate racemase (Pseudomonas aeruginosa (strain ATCC 15692 / DSM 22644 / CIP 104116 / JCM 14847 / LMG 12228 / 1C / PRS 101 / PAO1)).